The primary structure comprises 958 residues: Atromentin synthetase greA (958 aa).

The tract at residues 60–465 is adenylation (A) domain; that stretch reads SIQTKTFSAF…SGRIKDTVIV (406 aa). Positions 597–675 constitute a Carrier domain; the sequence is APSTETEKAL…SLANYVNALL (79 aa). The thiolation and peptide carrier (T) domain stretch occupies residues 602–672; the sequence is TEKALAKIYA…VVSSLANYVN (71 aa). S634 carries the post-translational modification O-(pantetheine 4'-phosphoryl)serine. Positions 698–946 are thioesterase (TE) domain; that stretch reads PIFFVHPGVG…MDFDHVPQFQ (249 aa).

Belongs to the ATP-dependent AMP-binding enzyme family.

It functions in the pathway secondary metabolite biosynthesis. Functionally, an L-tyrosine:2-oxoglutarate aminotransferase and atromentin synthetase greA catalyze consecutive steps to turn over L-tyrosine into atromentin, which represents the generic precursor molecule for the entire terphenylquinone and pulvinic acid family of pigments, which are widely distributed secondary metabolites in homobasidiomycetes. The first step catalyzed by the aminotransferase converts L-tyrosine in to 4-hydroxyphenylpyruvate (4-HPP). Adenylation of two 4-HPP monomers by the greA adenylation (A) domain, covalent tethering of the monomers as a thioester and oxoester onto the greA thiolation (T) and thioesterase (TE) domains, respectively, and symmetric C-C-bond formation between two monomers catalyzed by the greA TE domain leads to atromentin. In Suillus grevillei (Larch bolete), this protein is Atromentin synthetase greA (greA).